Consider the following 120-residue polypeptide: Seripauperin-10 (120 aa).

The first 20 residues, 1–20 (MVKLTSIAAGVAAIAATASA), serve as a signal peptide directing secretion.

Belongs to the SRP1/TIP1 family. Seripauperin subfamily.

The protein is Seripauperin-10 (PAU10) of Saccharomyces cerevisiae (strain ATCC 204508 / S288c) (Baker's yeast).